The primary structure comprises 506 residues: Histone deacetylase complex subunit CTI6 (506 aa).

Residues 49–71 form a disordered region; it reads EESVKQEDVPMEGGEGEVEEEEG. Residues 62–71 show a composition bias toward acidic residues; that stretch reads GEGEVEEEEG. A PHD-type zinc finger spans residues 72-123; that stretch reads ETRCICGELDTPDDSGFFIQCEQCSSWQHGYCVSITQDNAPDKYWCEQCRPE. Residues 138-425 form a disordered region; it reads IYKPVQEKRR…KPRLPPQRTS (288 aa). Thr-174 is subject to Phosphothreonine. Ser-175 carries the post-translational modification Phosphoserine. The residue at position 177 (Thr-177) is a Phosphothreonine. Residues 179 to 195 are compositionally biased toward acidic residues; that stretch reads DNVDDIGDEEDEVEDEA. Residues Ser-216 and Ser-267 each carry the phosphoserine modification. Basic and acidic residues-rich tracts occupy residues 231-271 and 312-342; these read DSDK…HQED and DDMK…EKES. The segment covering 373 to 393 has biased composition (basic residues); that stretch reads ASSRGSKRVSKPARKGNRTRR. Residues 394 to 404 are compositionally biased toward polar residues; that stretch reads SNTSSDTNQNR. Residues 405–415 are compositionally biased toward basic and acidic residues; the sequence is RSADIGTDKPV.

Component of the RPD3C(L) complex composed of at least ASH1, CTI6, DEP1, PHO23, RPD3, RXT2, RXT3, SAP30, SDS3, SIN3, UME1 and UME6. Interacts with CYC8.

The protein localises to the nucleus. Component of the RPD3C(L) histone deacetylase complex (HDAC). Responsible for the deacetylation of lysine residues on the N-terminal part of the core histones (H2A, H2B, H3 and H4). Histone deacetylation gives a tag for epigenetic repression and plays an important role in transcriptional regulation, cell cycle progression and developmental events. CTI6 links the SAGA coactivator to the CYC8-TUP1 corepressor. Involved in transcription regulation of heme-regulated genes and required for GCN5 recruitment, histone H3 acetylation and SPT15/TBP binding to promoters. This is Histone deacetylase complex subunit CTI6 (CTI6) from Saccharomyces cerevisiae (strain ATCC 204508 / S288c) (Baker's yeast).